A 200-amino-acid polypeptide reads, in one-letter code: 3-isopropylmalate dehydratase small subunit (200 aa).

This sequence belongs to the LeuD family. LeuD type 1 subfamily. Heterodimer of LeuC and LeuD.

It carries out the reaction (2R,3S)-3-isopropylmalate = (2S)-2-isopropylmalate. It functions in the pathway amino-acid biosynthesis; L-leucine biosynthesis; L-leucine from 3-methyl-2-oxobutanoate: step 2/4. Catalyzes the isomerization between 2-isopropylmalate and 3-isopropylmalate, via the formation of 2-isopropylmaleate. This is 3-isopropylmalate dehydratase small subunit from Campylobacter jejuni (strain RM1221).